We begin with the raw amino-acid sequence, 108 residues long: FK506-binding protein 1 (108 aa).

The 89-residue stretch at 20–108 (GDNVTIHYVG…KFEVELLKVN (89 aa)) folds into the PPIase FKBP-type domain.

It belongs to the FKBP-type PPIase family. FKBP1 subfamily.

It is found in the cytoplasm. The enzyme catalyses [protein]-peptidylproline (omega=180) = [protein]-peptidylproline (omega=0). Inhibited by both FK506 and rapamycin. Its function is as follows. PPIases accelerate the folding of proteins. It catalyzes the cis-trans isomerization of proline imidic peptide bonds in oligopeptides. The polypeptide is FK506-binding protein 1 (FRR1) (Cryptococcus neoformans var. grubii serotype A (strain H99 / ATCC 208821 / CBS 10515 / FGSC 9487) (Filobasidiella neoformans var. grubii)).